We begin with the raw amino-acid sequence, 388 residues long: Methylthioribose-1-phosphate isomerase (388 aa).

D258 (proton donor) is an active-site residue.

It belongs to the eIF-2B alpha/beta/delta subunits family. MtnA subfamily.

It localises to the cytoplasm. The protein localises to the nucleus. It carries out the reaction 5-(methylsulfanyl)-alpha-D-ribose 1-phosphate = 5-(methylsulfanyl)-D-ribulose 1-phosphate. Its pathway is amino-acid biosynthesis; L-methionine biosynthesis via salvage pathway; L-methionine from S-methyl-5-thio-alpha-D-ribose 1-phosphate: step 1/6. Functionally, catalyzes the interconversion of methylthioribose-1-phosphate (MTR-1-P) into methylthioribulose-1-phosphate (MTRu-1-P). This chain is Methylthioribose-1-phosphate isomerase, found in Sordaria macrospora (strain ATCC MYA-333 / DSM 997 / K(L3346) / K-hell).